Here is a 587-residue protein sequence, read N- to C-terminus: Vesicular glutamate transporter 2.2 (587 aa).

Residues 1–71 (MDTVKERVLA…CTCFGLPRRY (71 aa)) are Cytoplasmic-facing. A helical transmembrane segment spans residues 72–92 (IIAIMSGLGFCISFGIRCNLG). Residues 93–125 (VAIVDMVNNSTIHKGGKIIIKGKAKFNWDPETV) lie on the Vesicular side of the membrane. Residues N100 and N101 are each glycosylated (N-linked (GlcNAc...) asparagine). A helical membrane pass occupies residues 126-146 (GMIHGSFFWGYTVTQIPGGYI). Over 147-149 (SSR) the chain is Cytoplasmic. The chain crosses the membrane as a helical span at residues 150-170 (LAANRVFGAAILLTSTLNMFI). The Vesicular portion of the chain corresponds to 171–180 (PSAARVHYGC). A helical membrane pass occupies residues 181–203 (VMFVRILQGLVEGVTYPACHGIW). Topologically, residues 204-217 (SKWAPPLERSRLAT) are cytoplasmic. Residues 218–238 (TSFCGSYAGAVVAMPLAGILV) form a helical membrane-spanning segment. The Vesicular segment spans residues 239–245 (QYSGWSS). The chain crosses the membrane as a helical span at residues 246 to 266 (VFYIYGSFGIVWYMFWILVSY). Over 267–311 (ESPADHPTITDEERTYIEESIGESAKLLGAMEKYKTPWRKFFTSM) the chain is Cytoplasmic. A helical membrane pass occupies residues 312–332 (PVYAIIVANFCRSWTFYLLLI). Residues 333-350 (SQPAYFEEVFGFEISKVG) are Vesicular-facing. The chain crosses the membrane as a helical span at residues 351–371 (MVSALPHLVMTIIVPIGGQLA). At 372–387 (DYLRSKNILTTTTVRK) the chain is on the cytoplasmic side. Residues 388-408 (IMNCGGFGMEATLLLVVGFSH) traverse the membrane as a helical segment. Topologically, residues 409-410 (SK) are vesicular. The helical transmembrane segment at 411-431 (GVAISFLVLAVGFSGFAISGF) threads the bilayer. Over 432 to 444 (NVNHLDIAPRYAS) the chain is Cytoplasmic. Residues 445-465 (ILMGISNGVGTLSGMVCPLIV) form a helical membrane-spanning segment. Topologically, residues 466 to 479 (GAMTKNKTREEWQN) are vesicular. N471 is a glycosylation site (N-linked (GlcNAc...) asparagine). The chain crosses the membrane as a helical span at residues 480–500 (VFLIASLVHYGGVIFYGIFAS). Topologically, residues 501–587 (GEKQPWADPE…ERTYTGDGYS (87 aa)) are cytoplasmic.

The protein belongs to the major facilitator superfamily. Sodium/anion cotransporter family. VGLUT subfamily. As to expression, expressed in spinal cord.

The protein resides in the cytoplasmic vesicle. Its subcellular location is the secretory vesicle. It localises to the synaptic vesicle membrane. The protein localises to the membrane. It is found in the synapse. The protein resides in the synaptosome. Its subcellular location is the cell membrane. The enzyme catalyses L-glutamate(out) = L-glutamate(in). The catalysed reaction is 3 Na(+)(out) + phosphate(out) = 3 Na(+)(in) + phosphate(in). It catalyses the reaction phosphate(in) = phosphate(out). It carries out the reaction K(+)(in) + H(+)(out) = K(+)(out) + H(+)(in). The enzyme catalyses chloride(in) = chloride(out). With respect to regulation, chloride channel activity is allosterically activated by lumenal H(+) and Cl(-) leading to synaptic vesicles acidification. The L-glutamate transport activity is allosterically activated by lumenal H(+) and Cl(-). The allosteric requirement for H(+) efficiently prevents non-vesicular efflux across the plasma membrane. The L-glutamate uniporter activity exhibits a biphasic dependence on chloride concentration. In terms of biological role, multifunctional transporter that transports L-glutamate as well as multiple ions such as chloride, proton, potassium, sodium and phosphate. At the synaptic vesicle membrane, mainly functions as a uniporter which transports preferentially L-glutamate but also, phosphate from the cytoplasm into synaptic vesicles at presynaptic nerve terminals of excitatory neural cells. The L-glutamate or phosphate uniporter activity is electrogenic and is driven by the proton electrochemical gradient, mainly by the electrical gradient established by the vacuolar H(+)-ATPase across the synaptic vesicle membrane. In addition, functions as a chloride channel that allows a chloride permeation through the synaptic vesicle membrane therefore affects the proton electrochemical gradient and promotes synaptic vesicles acidification. Moreover, functions as a vesicular K(+)/H(+) antiport allowing to maintain the electrical gradient and to decrease chemical gradient and therefore sustain vesicular L-glutamate uptake. The vesicular H(+)/H(+) antiport activity is electroneutral. At the plasma membrane, following exocytosis, functions as a symporter of Na(+) and phosphate from the extracellular space to the cytoplasm allowing synaptic phosphate homeostasis regulation. The symporter activity is driven by an inside negative membrane potential and is electrogenic. Also involved in the regulation of retinal hyaloid vessel regression during postnatal development. May also play a role in the endocrine L-glutamatergic system of other tissues such as pineal gland and pancreas. This is Vesicular glutamate transporter 2.2 (slc17a6a) from Danio rerio (Zebrafish).